The sequence spans 530 residues: Arginine-containing cyclodipeptide synthase pthA (530 aa).

A Conserved DDXXE motif motif is present at residues 419-423; sequence DDRAE.

This sequence belongs to the arginine-containing cyclodipeptide synthase family.

The enzyme catalyses L-aspartyl-tRNA(Asp) + L-arginyl-tRNA(Arg) = cyclo(L-arginyl-L-aspartyl) + tRNA(Asp) + tRNA(Arg) + 2 H(+). It participates in secondary metabolite biosynthesis. Arginine-containing cyclodipeptide synthase; part of the cluster that mediates the biosynthesis of a highly modified cyclo-arginine-aspartate dipeptide (cRD). Within the pathway, pthA acts as the scaffold-generating enzyme and is responsible for formation of the cyclo-Arg-Asp diketopiperazine (cRW) from L-arginyl-tRNA(Arg) + L-aspartyl-tRNA(Asp). Additional enzymes from the cluster then further modify the cyclo-Arg-Asp diketopiperazine (cRW) scaffold. This Penicillium thymicola protein is Arginine-containing cyclodipeptide synthase pthA.